An 816-amino-acid polypeptide reads, in one-letter code: Transcription factor qa-1f (816 aa).

The segment at residues Cys-76–Cys-103 is a DNA-binding region (zn(2)-C6 fungal-type). The segment covering Ser-184–Ile-202 has biased composition (polar residues). Residues Ser-184–Leu-235 form a disordered region.

It localises to the nucleus. Its function is as follows. Transcription activator; part of the qa gene cluster that mediates the catabolism of quinic acid (QA) and as such, allows the use of QA as a sole carbon source. Activates the expression of qa cluster genes by binding to a 16 base-pair consensus sequence 5'-GGRTAARYRYTTAYCC-3' present in the promoters of the target genes. Regulates its own expression. May regulate the expression of many other genes inclusing genes with products in 8 mutually connected metabolic pathways: (1) starch and sucrose metabolism; (2) glycolysis/glucanogenesis; (3) TCA Cycle; (4) butanoate metabolism; (5) pyruvate metabolism; (6) aromatic amino acid and QA metabolism; (7) valine, leucine, and isoleucine degradation; and (8) transport of sugars and amino acids. The sequence is that of Transcription factor qa-1f from Neurospora crassa (strain ATCC 24698 / 74-OR23-1A / CBS 708.71 / DSM 1257 / FGSC 987).